A 330-amino-acid chain; its full sequence is Aspartate--ammonia ligase (330 aa).

This sequence belongs to the class-II aminoacyl-tRNA synthetase family. AsnA subfamily.

The protein localises to the cytoplasm. The enzyme catalyses L-aspartate + NH4(+) + ATP = L-asparagine + AMP + diphosphate + H(+). It functions in the pathway amino-acid biosynthesis; L-asparagine biosynthesis; L-asparagine from L-aspartate (ammonia route): step 1/1. This Escherichia coli O139:H28 (strain E24377A / ETEC) protein is Aspartate--ammonia ligase.